The sequence spans 264 residues: tRNA1(Val) (adenine(37)-N6)-methyltransferase (264 aa).

The protein belongs to the methyltransferase superfamily. tRNA (adenine-N(6)-)-methyltransferase family.

The protein resides in the cytoplasm. It catalyses the reaction adenosine(37) in tRNA1(Val) + S-adenosyl-L-methionine = N(6)-methyladenosine(37) in tRNA1(Val) + S-adenosyl-L-homocysteine + H(+). Functionally, specifically methylates the adenine in position 37 of tRNA(1)(Val) (anticodon cmo5UAC). This Shewanella pealeana (strain ATCC 700345 / ANG-SQ1) protein is tRNA1(Val) (adenine(37)-N6)-methyltransferase.